We begin with the raw amino-acid sequence, 286 residues long: Toxin zeta (286 aa).

39-46 serves as a coordination point for ATP; sequence GQPGSGKT. Residues 249–286 are disordered; that stretch reads MVQNQHQETPEFKAIQQKMESLQPPTPPIPKTPKLPGI. Pro residues predominate over residues 272-286; that stretch reads PPTPPIPKTPKLPGI.

It belongs to the zeta toxin family. As to quaternary structure, in the presence of the epsilon antitoxin, forms an inactive PezA(2)PezT(2) heterotetramer.

It carries out the reaction UDP-N-acetyl-alpha-D-glucosamine + ATP = UDP-N-acetyl-alpha-D-glucosamine 3'-phosphate + ADP + H(+). Its function is as follows. Toxic component of a type II toxin-antitoxin (TA) system. Phosphorylates UDP-N-acetyl-D-glucosamine (UNAG) on the 3'-hydroxyl group of the N-acetyl-D-glucosamine moiety, yielding UNAG-3P. UNAG-3P inhibits MurA, the first committed step in cell wall synthesis, which is then blocked. Phosphorylation is inhibited by cognate epsilon antitoxin. Part of a postsegregational killing (PSK) system involved in the killing of plasmid-free cells. The zeta toxin induces programmed cell death. This is Toxin zeta from Enterococcus hirae.